We begin with the raw amino-acid sequence, 272 residues long: Ribosomal RNA small subunit methyltransferase A (272 aa).

S-adenosyl-L-methionine contacts are provided by Asn18, Leu20, Gly45, Glu66, Asp91, and Asn113.

This sequence belongs to the class I-like SAM-binding methyltransferase superfamily. rRNA adenine N(6)-methyltransferase family. RsmA subfamily.

Its subcellular location is the cytoplasm. The enzyme catalyses adenosine(1518)/adenosine(1519) in 16S rRNA + 4 S-adenosyl-L-methionine = N(6)-dimethyladenosine(1518)/N(6)-dimethyladenosine(1519) in 16S rRNA + 4 S-adenosyl-L-homocysteine + 4 H(+). Its function is as follows. Specifically dimethylates two adjacent adenosines (A1518 and A1519) in the loop of a conserved hairpin near the 3'-end of 16S rRNA in the 30S particle. May play a critical role in biogenesis of 30S subunits. This chain is Ribosomal RNA small subunit methyltransferase A, found in Serratia proteamaculans (strain 568).